The primary structure comprises 468 residues: Secretogranin-3 (468 aa).

The signal sequence occupies residues 1–19 (MGFLGTGTWILVLVLPIQA). The segment at 23-69 (PGGSQDKSLHNRELSAERPLNEQIAEAEEDKIKKTYPPENKPGQSNY) is disordered. The segment covering 29–42 (KSLHNRELSAERPL) has biased composition (basic and acidic residues). S37 carries the post-translational modification Phosphoserine. S37 carries O-linked (Xyl...) (chondroitin sulfate) serine glycosylation. Residues T216 and T231 are each glycosylated (O-linked (GalNAc...) threonine). A disordered region spans residues 353 to 406 (KLFPAPSEKSHEETDSTKEEAAKMEKEYGSLKDSTKDDNSNPGGKTDEPKGKTE). O-linked (GalNAc...) serine glycosylation is present at S359. A compositionally biased stretch (basic and acidic residues) spans 360–406 (EKSHEETDSTKEEAAKMEKEYGSLKDSTKDDNSNPGGKTDEPKGKTE). S362 is subject to Phosphoserine.

Interacts with CHGA. Interacts with secretogranin II/SCG2. Interacts (via C-terminus) with CPE. Post-translationally, O-glycosylated. In terms of tissue distribution, detected in urine (at protein level). Expressed in brain, heart, kidney, liver and skeletal muscle.

Its subcellular location is the cytoplasmic vesicle. The protein resides in the secretory vesicle. The protein localises to the secretory vesicle membrane. It is found in the secreted. In terms of biological role, member of the granin protein family that regulates the biogenesis of secretory granules. Acts as a sorting receptor for intragranular proteins including chromogranin A/CHGA. May also play a role in angiogenesis. Promotes endothelial proliferation, migration and tube formation through MEK/ERK signaling pathway. This chain is Secretogranin-3 (SCG3), found in Homo sapiens (Human).